An 81-amino-acid chain; its full sequence is Small cysteine-rich protein 1 2 (81 aa).

Positions 1–19 (MGVNFNICLLLLLVATISS) are cleaved as a signal peptide. Residues 20-39 (QPLKATEKDDSTDENPFGIY) constitute a propeptide that is removed on maturation.

The protein belongs to the Cnidaria small cysteine-rich protein (SCRiP) family. alpha subfamily. In terms of processing, the basic myotoxic domain of rattlesnake crotamine toxins (with 6 Cys residues) has been detected in this protein. However, this protein contains 2 additional Cys at the C-terminal region. Hence, this protein may contain 4 disulfide bonds instead of the 3 suggested by the myotoxin domain.

It is found in the secreted. It localises to the nematocyst. Functionally, induces neurotoxic symptoms on zebrafish. Has also been claimed to be implied in calcification, but tests on homolog proteins suggest that proteins of this family have a neurotoxic function and not a calcification function. This is Small cysteine-rich protein 1 2 from Montipora capitata (Rice coral).